The following is a 258-amino-acid chain: Synapse differentiation-inducing gene protein 1 (258 aa).

The Cytoplasmic segment spans residues methionine 1–histidine 181. Position 137 is a phosphoserine (serine 137). The helical transmembrane segment at leucine 182–tyrosine 202 threads the bilayer. Residues leucine 203 to phenylalanine 228 lie on the Extracellular side of the membrane. The helical intramembrane region spans leucine 229–isoleucine 249. The Extracellular segment spans residues alanine 250 to leucine 258.

Belongs to the CD225/Dispanin family. Homodimer. Interacts with GRIA1 and GRIA2.

The protein resides in the cell membrane. It is found in the early endosome membrane. The protein localises to the postsynaptic density membrane. It localises to the synapse. Its subcellular location is the cell projection. The protein resides in the dendrite. It is found in the dendritic spine. In terms of biological role, may regulate AMPA receptor content at nascent synapses, and have a role in postsynaptic development and maturation. The protein is Synapse differentiation-inducing gene protein 1 (SYNDIG1) of Homo sapiens (Human).